Reading from the N-terminus, the 426-residue chain is Antigen EM13 (426 aa).

The 240-residue stretch at 1-240 (MIQERADIEK…TVAKVDADAD (240 aa)) folds into the F-BAR domain. Disordered regions lie at residues 287 to 315 (LTSL…ISTS) and 350 to 369 (ISKE…FVDD). Polar residues predominate over residues 305–315 (TTDSGSNISTS). Residues 371–426 (RPGVPIRALYDYVGVEADELSFNSGDLFEKLEDEDEQGWCKGRKDGRVGLYPRQLR) form the SH3 domain.

The protein is Antigen EM13 (EM13) of Echinococcus multilocularis (Fox tapeworm).